We begin with the raw amino-acid sequence, 265 residues long: Ribosomal RNA small subunit methyltransferase A (265 aa).

S-adenosyl-L-methionine contacts are provided by asparagine 13, leucine 15, glycine 40, glutamate 61, aspartate 85, and asparagine 103.

The protein belongs to the class I-like SAM-binding methyltransferase superfamily. rRNA adenine N(6)-methyltransferase family. RsmA subfamily.

The protein localises to the cytoplasm. The catalysed reaction is adenosine(1518)/adenosine(1519) in 16S rRNA + 4 S-adenosyl-L-methionine = N(6)-dimethyladenosine(1518)/N(6)-dimethyladenosine(1519) in 16S rRNA + 4 S-adenosyl-L-homocysteine + 4 H(+). In terms of biological role, specifically dimethylates two adjacent adenosines (A1518 and A1519) in the loop of a conserved hairpin near the 3'-end of 16S rRNA in the 30S particle. May play a critical role in biogenesis of 30S subunits. In Aromatoleum aromaticum (strain DSM 19018 / LMG 30748 / EbN1) (Azoarcus sp. (strain EbN1)), this protein is Ribosomal RNA small subunit methyltransferase A.